Here is a 487-residue protein sequence, read N- to C-terminus: L-carnitine dehydrogenase/betainyl-CoA thioesterase (487 aa).

Residues 1–327 (MTTAAIIGGG…DAALKPKALP (327 aa)) form an L-carnitine dehydrogenase region. 8–13 (GGGVIG) serves as a coordination point for NAD(+). The tract at residues 328-487 (DLDTADLTQP…GAGSAIRKPA (160 aa)) is betainyl-CoA thioesterase.

This sequence in the N-terminal section; belongs to the 3-hydroxyacyl-CoA dehydrogenase family. L-carnitine dehydrogenase subfamily. In the C-terminal section; belongs to the betainyl-CoA thioesterase family. Homodimer.

It is found in the cytoplasm. The catalysed reaction is carnitine + NAD(+) = 3-dehydrocarnitine + NADH + H(+). The enzyme catalyses N,N,N-trimethylglycyl-CoA + H2O = glycine betaine + CoA + H(+). The protein operates within amine and polyamine metabolism; carnitine metabolism. Multifunctional enzyme that catalyzes the NAD(+)-dependent oxidation of L-carnitine to 3-dehydrocarnitine and the cleavage of betainyl-CoA (N,N,N-trimethylglycyl-CoA) into glycine betaine and coenzyme A. This chain is L-carnitine dehydrogenase/betainyl-CoA thioesterase, found in Ruegeria pomeroyi (strain ATCC 700808 / DSM 15171 / DSS-3) (Silicibacter pomeroyi).